We begin with the raw amino-acid sequence, 332 residues long: Chorismate synthase (332 aa).

NADP(+) is bound at residue arginine 46. FMN contacts are provided by residues 123 to 125, glycine 253, 268 to 272, and arginine 295; these read HFS and KPTSS.

The protein belongs to the chorismate synthase family. Homotetramer. Requires FMNH2 as cofactor.

The enzyme catalyses 5-O-(1-carboxyvinyl)-3-phosphoshikimate = chorismate + phosphate. It functions in the pathway metabolic intermediate biosynthesis; chorismate biosynthesis; chorismate from D-erythrose 4-phosphate and phosphoenolpyruvate: step 7/7. Functionally, catalyzes the anti-1,4-elimination of the C-3 phosphate and the C-6 proR hydrogen from 5-enolpyruvylshikimate-3-phosphate (EPSP) to yield chorismate, which is the branch point compound that serves as the starting substrate for the three terminal pathways of aromatic amino acid biosynthesis. This reaction introduces a second double bond into the aromatic ring system. The chain is Chorismate synthase from Chitinophaga pinensis (strain ATCC 43595 / DSM 2588 / LMG 13176 / NBRC 15968 / NCIMB 11800 / UQM 2034).